We begin with the raw amino-acid sequence, 472 residues long: Adenosylhomocysteinase (472 aa).

Substrate contacts are provided by Thr61, Asp139, and Glu198. Residue 199–201 participates in NAD(+) binding; the sequence is TTT. Lys228 and Asp232 together coordinate substrate. NAD(+) contacts are provided by residues Asn233, 262-267, Glu285, Asn320, 341-343, and Asn386; these read GFGDVG and IGH.

It belongs to the adenosylhomocysteinase family. Requires NAD(+) as cofactor.

It is found in the cytoplasm. The catalysed reaction is S-adenosyl-L-homocysteine + H2O = L-homocysteine + adenosine. Its pathway is amino-acid biosynthesis; L-homocysteine biosynthesis; L-homocysteine from S-adenosyl-L-homocysteine: step 1/1. Functionally, may play a key role in the regulation of the intracellular concentration of adenosylhomocysteine. The chain is Adenosylhomocysteinase from Sphingopyxis alaskensis (strain DSM 13593 / LMG 18877 / RB2256) (Sphingomonas alaskensis).